The following is a 120-amino-acid chain: NAD(P)H-quinone oxidoreductase subunit 3, chloroplastic (120 aa).

Helical transmembrane passes span 9–29 (IFWA…LISG), 64–84 (MFAL…PWAM), and 88–108 (VLGV…IVGS).

Belongs to the complex I subunit 3 family. NDH is composed of at least 16 different subunits, 5 of which are encoded in the nucleus.

The protein resides in the plastid. It is found in the chloroplast thylakoid membrane. The enzyme catalyses a plastoquinone + NADH + (n+1) H(+)(in) = a plastoquinol + NAD(+) + n H(+)(out). It catalyses the reaction a plastoquinone + NADPH + (n+1) H(+)(in) = a plastoquinol + NADP(+) + n H(+)(out). Functionally, NDH shuttles electrons from NAD(P)H:plastoquinone, via FMN and iron-sulfur (Fe-S) centers, to quinones in the photosynthetic chain and possibly in a chloroplast respiratory chain. The immediate electron acceptor for the enzyme in this species is believed to be plastoquinone. Couples the redox reaction to proton translocation, and thus conserves the redox energy in a proton gradient. In Buxus microphylla (Littleleaf boxwood), this protein is NAD(P)H-quinone oxidoreductase subunit 3, chloroplastic.